The sequence spans 88 residues: Large ribosomal subunit protein bL27 (88 aa).

The segment at 1-24 (MATKKSGGSSGNGRDSRGRRLGVK) is disordered.

Belongs to the bacterial ribosomal protein bL27 family.

This is Large ribosomal subunit protein bL27 from Ehrlichia chaffeensis (strain ATCC CRL-10679 / Arkansas).